Consider the following 184-residue polypeptide: Crossover junction endodeoxyribonuclease RuvC (184 aa).

Active-site residues include Asp7, Glu68, and Asp141. The Mg(2+) site is built by Asp7, Glu68, and Asp141.

Belongs to the RuvC family. Homodimer which binds Holliday junction (HJ) DNA. The HJ becomes 2-fold symmetrical on binding to RuvC with unstacked arms; it has a different conformation from HJ DNA in complex with RuvA. In the full resolvosome a probable DNA-RuvA(4)-RuvB(12)-RuvC(2) complex forms which resolves the HJ. Requires Mg(2+) as cofactor.

The protein localises to the cytoplasm. The enzyme catalyses Endonucleolytic cleavage at a junction such as a reciprocal single-stranded crossover between two homologous DNA duplexes (Holliday junction).. In terms of biological role, the RuvA-RuvB-RuvC complex processes Holliday junction (HJ) DNA during genetic recombination and DNA repair. Endonuclease that resolves HJ intermediates. Cleaves cruciform DNA by making single-stranded nicks across the HJ at symmetrical positions within the homologous arms, yielding a 5'-phosphate and a 3'-hydroxyl group; requires a central core of homology in the junction. The consensus cleavage sequence is 5'-(A/T)TT(C/G)-3'. Cleavage occurs on the 3'-side of the TT dinucleotide at the point of strand exchange. HJ branch migration catalyzed by RuvA-RuvB allows RuvC to scan DNA until it finds its consensus sequence, where it cleaves and resolves the cruciform DNA. The sequence is that of Crossover junction endodeoxyribonuclease RuvC from Mycobacterium ulcerans (strain Agy99).